Consider the following 468-residue polypeptide: UDP-N-acetylmuramate--L-alanine ligase (468 aa).

ATP is bound at residue 112-118 (GTHGKTT).

The protein belongs to the MurCDEF family.

It localises to the cytoplasm. The enzyme catalyses UDP-N-acetyl-alpha-D-muramate + L-alanine + ATP = UDP-N-acetyl-alpha-D-muramoyl-L-alanine + ADP + phosphate + H(+). It functions in the pathway cell wall biogenesis; peptidoglycan biosynthesis. Its function is as follows. Cell wall formation. The polypeptide is UDP-N-acetylmuramate--L-alanine ligase (Bordetella petrii (strain ATCC BAA-461 / DSM 12804 / CCUG 43448)).